An 81-amino-acid polypeptide reads, in one-letter code: Spore coat protein F-like protein YraG (81 aa).

Belongs to the CotF family.

The protein resides in the spore coat. This is Spore coat protein F-like protein YraG (yraG) from Bacillus subtilis (strain 168).